A 285-amino-acid polypeptide reads, in one-letter code: UPF0703 protein YcgQ (285 aa).

The next 4 membrane-spanning stretches (helical) occupy residues 4–24 (LLVLMGFTFFFYHLHASGNLT), 34–54 (LSFIAIFLLAILTAVQAYLFI), 89–109 (LIYVVFLFPLVSGIFFPIATL), and 210–230 (FVLRFGIIHCIADSGVYGMLV).

It belongs to the UPF0703 family.

Its subcellular location is the cell membrane. In Bacillus subtilis (strain 168), this protein is UPF0703 protein YcgQ (ycgQ).